Consider the following 94-residue polypeptide: uncharacterized protein (94 aa).

A signal peptide spans Met-1–Ala-19.

It belongs to the protease inhibitor I9 family.

This is an uncharacterized protein from Neurospora crassa (strain ATCC 24698 / 74-OR23-1A / CBS 708.71 / DSM 1257 / FGSC 987).